A 279-amino-acid polypeptide reads, in one-letter code: Acetylglutamate kinase (279 aa).

Residues 64-65, Arg-86, and Asn-177 contribute to the substrate site; that span reads GG.

This sequence belongs to the acetylglutamate kinase family. ArgB subfamily.

Its subcellular location is the cytoplasm. It carries out the reaction N-acetyl-L-glutamate + ATP = N-acetyl-L-glutamyl 5-phosphate + ADP. It participates in amino-acid biosynthesis; L-arginine biosynthesis; N(2)-acetyl-L-ornithine from L-glutamate: step 2/4. In terms of biological role, catalyzes the ATP-dependent phosphorylation of N-acetyl-L-glutamate. The protein is Acetylglutamate kinase of Campylobacter jejuni subsp. jejuni serotype O:23/36 (strain 81-176).